Consider the following 179-residue polypeptide: Putative FBD-associated F-box protein At3g12840 (179 aa).

Positions 14-60 constitute an F-box domain; the sequence is AARINDLPDDLLATVLSFVPTKDAVATSILSKRWRPIWKRAVNLESD. The FBD domain maps to 101 to 152; that stretch reads KWKQPDFVPLSLYRSLEAFEWIGFKGREKTEKKAAFHILRNACNLKTMAITT.

This Arabidopsis thaliana (Mouse-ear cress) protein is Putative FBD-associated F-box protein At3g12840.